The sequence spans 1116 residues: MTDVSATTGRAGDRVSSTSSEVAVETTSQALTNGAAKEPLAAVTAEATATATVTATTTATVTATTTAATATMATAVISKQAKSECHSQSNNNQHVETAPSKQSSDSEASAPTTVSIPSANAKINSSSSGKTTATQQDVDEVARLFEEKPEAFEKWLTERAPPEALSRLHEFIESRKPHKRPSVTSDLFQQWMASPTVQQKSPRKLSNSSVHALPESRRHLMELDEGELFMELIRDVANELDIDVLCHKILVNVGLLTHADRGSLFLAKGTPNNRYLVAKLFDVTQTTALKDAVTRARAEEIIIPFGIGIAGMVAQTKQMINIKEAYKDARFNCEIDLKTGYTTNAILCMPICNYEGDIIGVAQIINKTNGCMEFDEHDVEIFRRYLTFCGIGIQNAQLFEMSVQEYRRNQILLNLARSIFEEQNNLECLVTKIMTEARELLKCERCSVFLVDLDCCEESHLEKIIEKPHQLQQQRTPRAIMSGDSFEEKQNMRNRFTVLFELGGENHAANVSRPSINDLSHSTLAQIAQFVATTGQTVNICDVQDWVREHNQIRAESEIDSTQAILCMPIVNAQKTVIGVAQLINKASGLPFTESDASIFEAFAIFCGLGIHNTQMYENACKLMAKQKVALECLSYHATASQDQTEKLAQDVIAEAEAYNLYSFTFTDFDLVDDDTCRAVLRMFMQCNLVSQFHIPYDVLCRWVLSVRKNYRPVKYHNWRHALNVAQTMFAMLKTGKMERFMTDLEILGLLVACLCHDLDHRGTNNAFQTKTESPLAILYTTSTMEHHHFDQCVMILNSEGNNIFQALSPEDYRSVMKTVESAILSTDLAMYFKKRNAFLELVENGEFDWQGEEKKDLLCGMMMTACDVSAIAKPWEVQHRVAKLVADEFFDQGDLEKLQLNTQPVAMMDRERKDELPKMQVGFIDVICLPLYRVLCDTFPWITPLYEGTLENRRNWQDLAEKVEMGLTWIDHDTIDKPVEEFAGCADEEIKDIEFTVTTLNCNQHGGSAGGGEDTHTPEHQRSSSRLSIKKTGALGKVVRSKLSKTLYNSMDGSKPKTSLKLLESHVSEDMDDKSPTSPSQPHSGSVGRMSASSSTSSAGTVDKSKKRSKLCALL.

Disordered stretches follow at residues methionine 1 to alanine 36 and lysine 82 to glutamine 136. Over residues valine 15–serine 28 the composition is skewed to low complexity. Residues histidine 86 to glutamine 136 are compositionally biased toward polar residues. GAF domains follow at residues aspartate 241–isoleucine 393 and asparagine 425–isoleucine 611. The region spanning serine 641–valine 964 is the PDEase domain. Catalysis depends on histidine 717, which acts as the Proton donor. The a divalent metal cation site is built by histidine 721, histidine 757, aspartate 758, and aspartate 868. Disordered stretches follow at residues glutamine 1005 to lysine 1031 and histidine 1067 to leucine 1116. 2 stretches are compositionally biased toward basic and acidic residues: residues glutamate 1014–arginine 1023 and histidine 1067–serine 1076. Low complexity predominate over residues serine 1085–valine 1103. A compositionally biased stretch (basic residues) spans serine 1106–leucine 1116. Residue cysteine 1113 is modified to Cysteine methyl ester. The S-farnesyl cysteine moiety is linked to residue cysteine 1113. Positions alanine 1114–leucine 1116 are cleaved as a propeptide — removed in mature form.

It belongs to the cyclic nucleotide phosphodiesterase family. In terms of assembly, interacts with PrBP. It depends on a divalent metal cation as a cofactor.

The protein localises to the cell membrane. It catalyses the reaction 3',5'-cyclic GMP + H2O = GMP + H(+). Functionally, has a role regulating cGMP transport in Malpighian tubule principal cells. In Drosophila mojavensis (Fruit fly), this protein is cGMP-specific 3',5'-cyclic phosphodiesterase.